A 245-amino-acid chain; its full sequence is GATA zinc finger domain-containing protein 1 (245 aa).

Residues 9-33 (CSMCKTNTSSMWKKGSQGEILCNNC) form a GATA-type zinc finger. The segment covering 39–70 (TAAGGNNNNNSSSSTSGSSSYTGTTFASTSTS) has biased composition (low complexity). Residues 39 to 110 (TAAGGNNNNN…PAAEKKVSTK (72 aa)) form a disordered region. Residues 71-80 (QQSNGGNTKQ) are compositionally biased toward polar residues.

The protein localises to the nucleus. Component of some chromatin complex recruited to chromatin sites methylated 'Lys-4' of histone H3 (H3K4me), with a preference for trimethylated form (H3K4me3). The chain is GATA zinc finger domain-containing protein 1 (gatad1) from Xenopus laevis (African clawed frog).